Reading from the N-terminus, the 291-residue chain is ATP synthase gamma chain (291 aa).

The protein belongs to the ATPase gamma chain family. F-type ATPases have 2 components, CF(1) - the catalytic core - and CF(0) - the membrane proton channel. CF(1) has five subunits: alpha(3), beta(3), gamma(1), delta(1), epsilon(1). CF(0) has three main subunits: a, b and c.

It localises to the cell inner membrane. Its function is as follows. Produces ATP from ADP in the presence of a proton gradient across the membrane. The gamma chain is believed to be important in regulating ATPase activity and the flow of protons through the CF(0) complex. This chain is ATP synthase gamma chain, found in Ruegeria sp. (strain TM1040) (Silicibacter sp.).